Consider the following 152-residue polypeptide: Small ribosomal subunit protein uS13 (152 aa).

Belongs to the universal ribosomal protein uS13 family. Component of the small ribosomal subunit.

Its subcellular location is the cytoplasm. Functionally, component of the small ribosomal subunit. The ribosome is a large ribonucleoprotein complex responsible for the synthesis of proteins in the cell. The chain is Small ribosomal subunit protein uS13 (rps18) from Ictalurus punctatus (Channel catfish).